The sequence spans 478 residues: Ribosomal RNA small subunit methyltransferase F (478 aa).

S-adenosyl-L-methionine contacts are provided by residues 123–129 (AAAPGSK), Glu-147, Asp-174, and Asp-192. The active-site Nucleophile is Cys-245.

It belongs to the class I-like SAM-binding methyltransferase superfamily. RsmB/NOP family.

Its subcellular location is the cytoplasm. It carries out the reaction cytidine(1407) in 16S rRNA + S-adenosyl-L-methionine = 5-methylcytidine(1407) in 16S rRNA + S-adenosyl-L-homocysteine + H(+). In terms of biological role, specifically methylates the cytosine at position 1407 (m5C1407) of 16S rRNA. The protein is Ribosomal RNA small subunit methyltransferase F of Vibrio campbellii (strain ATCC BAA-1116).